The primary structure comprises 308 residues: Ribosomal RNA large subunit methyltransferase F (308 aa).

A disordered region spans residues 190-212 (DSAASARAGSERKRRNLGQDKND).

Belongs to the methyltransferase superfamily. METTL16/RlmF family.

It is found in the cytoplasm. It carries out the reaction adenosine(1618) in 23S rRNA + S-adenosyl-L-methionine = N(6)-methyladenosine(1618) in 23S rRNA + S-adenosyl-L-homocysteine + H(+). In terms of biological role, specifically methylates the adenine in position 1618 of 23S rRNA. This is Ribosomal RNA large subunit methyltransferase F from Citrobacter koseri (strain ATCC BAA-895 / CDC 4225-83 / SGSC4696).